The following is a 28-amino-acid chain: Phospholipase A2 pseudexin C chain (28 aa).

Tyrosine 28 contributes to the Ca(2+) binding site.

The protein belongs to the phospholipase A2 family. Group I subfamily. Ca(2+) serves as cofactor. In terms of tissue distribution, expressed by the venom gland.

Its subcellular location is the secreted. It carries out the reaction a 1,2-diacyl-sn-glycero-3-phosphocholine + H2O = a 1-acyl-sn-glycero-3-phosphocholine + a fatty acid + H(+). In terms of biological role, PLA2 catalyzes the calcium-dependent hydrolysis of the 2-acyl groups in 3-sn-phosphoglycerides. The chain is Phospholipase A2 pseudexin C chain from Pseudechis porphyriacus (Red-bellied black snake).